A 106-amino-acid polypeptide reads, in one-letter code: Putative double-stranded DNA mimic protein VP1949 (106 aa).

The protein belongs to the putative dsDNA mimic protein family.

In terms of biological role, may act as a double-stranded DNA (dsDNA) mimic. Probably regulates the activity of a dsDNA-binding protein. This Vibrio parahaemolyticus serotype O3:K6 (strain RIMD 2210633) protein is Putative double-stranded DNA mimic protein VP1949.